A 103-amino-acid chain; its full sequence is Large ribosomal subunit protein uL24 (103 aa).

This sequence belongs to the universal ribosomal protein uL24 family. Part of the 50S ribosomal subunit.

In terms of biological role, one of two assembly initiator proteins, it binds directly to the 5'-end of the 23S rRNA, where it nucleates assembly of the 50S subunit. One of the proteins that surrounds the polypeptide exit tunnel on the outside of the subunit. The polypeptide is Large ribosomal subunit protein uL24 (Listeria innocua serovar 6a (strain ATCC BAA-680 / CLIP 11262)).